Here is a 27-residue protein sequence, read N- to C-terminus: Small integral membrane protein 43 (27 aa).

Residues 15-21 form an important for interaction with SLC2A1 and SLC2A3 region; the sequence is HREPWGF.

In terms of assembly, interacts with glucose transporters SLC2A1/GLUT1 and SLC2A3/GLUT3; the interactions may promote SLC2A1- and SLC2A3-mediated glucose transport to meet the energy needs of mesendoderm differentiation.

It is found in the cell membrane. Functionally, required for mesendoderm differentiation. Interacts with glucose transporters and promotes glucose uptake. Probably augments the glucose uptake capacity of glucose transporter proteins to meet the energy needs of mesendoderm differentiation. This is Small integral membrane protein 43 from Pongo abelii (Sumatran orangutan).